A 483-amino-acid chain; its full sequence is Trigger factor (483 aa).

The region spanning 162 to 243 (GDYVSLDLSA…VRGVKEKELP (82 aa)) is the PPIase FKBP-type domain. The tract at residues 459 to 483 (AVAPGDGDATVEPVEPVEAETDGNG) is disordered. Positions 473-483 (EPVEAETDGNG) are enriched in acidic residues.

Belongs to the FKBP-type PPIase family. Tig subfamily.

The protein localises to the cytoplasm. The catalysed reaction is [protein]-peptidylproline (omega=180) = [protein]-peptidylproline (omega=0). Functionally, involved in protein export. Acts as a chaperone by maintaining the newly synthesized protein in an open conformation. Functions as a peptidyl-prolyl cis-trans isomerase. The protein is Trigger factor of Frankia casuarinae (strain DSM 45818 / CECT 9043 / HFP020203 / CcI3).